Reading from the N-terminus, the 274-residue chain is Coagulation factor IX (274 aa).

Sulfotyrosine is present on Tyr-23. The N-linked (GlcNAc...) asparagine glycan is linked to Asn-25. Ser-26 carries the phosphoserine modification. The N-linked (GlcNAc...) asparagine glycan is linked to Asn-35. A glycan (O-linked (GalNAc...) threonine) is linked at Thr-37. Asn-40 carries N-linked (GlcNAc...) asparagine glycosylation. In terms of domain architecture, Peptidase S1 spans Val-49 to Val-274. Cys-74 and Cys-90 are disulfide-bonded. Residue His-89 is the Charge relay system of the active site. Ca(2+) is bound by residues Glu-103, Asn-105, Glu-110, and Glu-113. N-linked (GlcNAc...) asparagine glycosylation occurs at Asn-128. Residue Asp-137 is the Charge relay system of the active site. Disulfide bonds link Cys-204–Cys-218 and Cys-229–Cys-257. The active-site Charge relay system is the Ser-233.

Belongs to the peptidase S1 family. In terms of assembly, heterodimer of a light chain and a heavy chain; disulfide-linked. Interacts (inactive and activated) with F11 (activated) in calcium-dependent manner. Interacts with SERPINC1. Activated by factor XIa, which excises the activation peptide. The propeptide can also be removed by snake venom protease. Activated by coagulation factor VIIa-tissue factor (F7-F3) complex in calcium-dependent manner.

It localises to the secreted. It carries out the reaction Selective cleavage of Arg-|-Ile bond in factor X to form factor Xa.. In terms of biological role, factor IX is a vitamin K-dependent plasma protein that participates in the intrinsic pathway of blood coagulation by converting factor X to its active form in the presence of Ca(2+) ions, phospholipids, and factor VIIIa. This chain is Coagulation factor IX (F9), found in Ovis aries (Sheep).